The sequence spans 956 residues: Cytolysin RtxA (956 aa).

Residues Leu-48 to Lys-58 are cholesterol recognition/amino acid consensus (CRAC) region 1. Cholesterol recognition/amino acid consensus (CARC) region stretches follow at residues Lys-280 to Leu-287 and Lys-340 to Leu-348. A cholesterol recognition/amino acid consensus (CRAC) region 2 region spans residues Leu-349–Arg-354. The segment at Arg-444–Leu-453 is cholesterol recognition/amino acid consensus (CARC) region 3. Lys-558 carries the N6-myristoyl lysine lipid modification. The Hemolysin-type calcium-binding 1 repeat unit spans residues Val-613–Arg-639. Lys-689 carries N6-myristoyl lysine lipidation. Hemolysin-type calcium-binding repeat units lie at residues Gly-722–Leu-756 and Phe-757–Val-791.

The protein belongs to the RTX prokaryotic toxin (TC 1.C.11) family. Post-translationally, myristoylated by RtxC; the toxin only becomes active when modified. Mainly myristoylated; a very minor fraction is acylated with hydroxymyristoyl, lauroyl and palmitoleyl chains fatty acyl groups. Fatty acylation is involved in binding to host membranes and promotes the irreversible insertion of RtxA into the host cell membrane.

It is found in the secreted. Its subcellular location is the host cell membrane. Its function is as follows. Bacterial cytolysin that attacks host cell membranes and causes cell rupture by forming a pore. Binds and permeabilizes target cells by forming cation-selective pores. Constitutes the key virulence cytotoxin of K.kingae. Binds cholesterol and oligosaccharides on the surface of host cells. Does not bind beta-2 integrin (ITGB2) on the host cell surface. This Kingella kingae protein is Cytolysin RtxA.